We begin with the raw amino-acid sequence, 346 residues long: Fe(3+) ions import ATP-binding protein FbpC 2 (346 aa).

Positions 5–235 constitute an ABC transporter domain; it reads LEVDGVDKSF…PVDVPTAEFI (231 aa). 37 to 44 is an ATP binding site; that stretch reads GPSGCGKT.

This sequence belongs to the ABC transporter superfamily. Fe(3+) ion importer (TC 3.A.1.10) family. In terms of assembly, the complex is composed of two ATP-binding proteins (FbpC), two transmembrane proteins (FbpB) and a solute-binding protein (FbpA).

It is found in the cell membrane. It carries out the reaction Fe(3+)(out) + ATP + H2O = Fe(3+)(in) + ADP + phosphate + H(+). Part of the ABC transporter complex FbpABC involved in Fe(3+) ions import. Responsible for energy coupling to the transport system. The sequence is that of Fe(3+) ions import ATP-binding protein FbpC 2 from Rhodococcus jostii (strain RHA1).